Consider the following 368-residue polypeptide: Protein mab-21-like (368 aa).

This sequence belongs to the mab-21 family.

This is Protein mab-21-like from Drosophila melanogaster (Fruit fly).